Here is a 273-residue protein sequence, read N- to C-terminus: Cell division protein ZipA (273 aa).

A topological domain (periplasmic) is located at residue Met1. The chain crosses the membrane as a helical span at residues 2–22 (EFGLREWLIVIGIIVIAGILF). Residues 23–273 (DGWRRMRGGK…FERRQLTQKR (251 aa)) lie on the Cytoplasmic side of the membrane. The disordered stretch occupies residues 65–125 (EMEPQLDEDD…QEPKKSAKLS (61 aa)). Basic and acidic residues predominate over residues 111 to 120 (VDDKPQEPKK).

It belongs to the ZipA family. In terms of assembly, interacts with FtsZ via their C-terminal domains.

Its subcellular location is the cell inner membrane. Essential cell division protein that stabilizes the FtsZ protofilaments by cross-linking them and that serves as a cytoplasmic membrane anchor for the Z ring. Also required for the recruitment to the septal ring of downstream cell division proteins. The polypeptide is Cell division protein ZipA (Ectopseudomonas mendocina (strain ymp) (Pseudomonas mendocina)).